Here is a 525-residue protein sequence, read N- to C-terminus: Cytochrome P450 4V2 (525 aa).

Residues 14–34 (LLWGAASAVSLAGATILISIF) traverse the membrane as a helical segment. 2 residues coordinate heme: Glu-329 and Cys-467.

This sequence belongs to the cytochrome P450 family. The cofactor is heme.

Its subcellular location is the endoplasmic reticulum membrane. The catalysed reaction is dodecanoate + reduced [NADPH--hemoprotein reductase] + O2 = 12-hydroxydodecanoate + oxidized [NADPH--hemoprotein reductase] + H2O + H(+). The enzyme catalyses tetradecanoate + reduced [NADPH--hemoprotein reductase] + O2 = 14-hydroxytetradecanoate + oxidized [NADPH--hemoprotein reductase] + H2O + H(+). It carries out the reaction hexadecanoate + reduced [NADPH--hemoprotein reductase] + O2 = 16-hydroxyhexadecanoate + oxidized [NADPH--hemoprotein reductase] + H2O + H(+). It catalyses the reaction (5Z,8Z,11Z,14Z,17Z)-eicosapentaenoate + reduced [NADPH--hemoprotein reductase] + O2 = 20-hydroxy-(5Z,8Z,11Z,14Z,17Z)-eicosapentaenoate + oxidized [NADPH--hemoprotein reductase] + H2O + H(+). The catalysed reaction is (4Z,7Z,10Z,13Z,16Z,19Z)-docosahexaenoate + reduced [NADPH--hemoprotein reductase] + O2 = 22-hydroxy-(4Z,7Z,10Z,13Z,16Z,19Z)-docosahexaenoate + oxidized [NADPH--hemoprotein reductase] + H2O + H(+). It participates in lipid metabolism; fatty acid metabolism. With respect to regulation, inhibited by N-hydroxy-N'-(4-n-butyl-2-methylphenyl formamidine)(HET0016) with an IC(50) of 38 nM. Its function is as follows. A cytochrome P450 monooxygenase involved in fatty acid metabolism in the eye. Catalyzes the omega-hydroxylation of polyunsaturated fatty acids (PUFAs) docosahexaenoate (DHA) and its precursor eicosapentaenoate (EPA), and may contribute to the homeostasis of these retinal PUFAs. Omega hydroxylates saturated fatty acids such as laurate, myristate and palmitate, the catalytic efficiency decreasing in the following order: myristate &gt; laurate &gt; palmitate (C14&gt;C12&gt;C16). Mechanistically, uses molecular oxygen inserting one oxygen atom into a substrate, and reducing the second into a water molecule, with two electrons provided by NADPH via cytochrome P450 reductase (CPR; NADPH-ferrihemoprotein reductase). The protein is Cytochrome P450 4V2 (Cyp4v2) of Mus musculus (Mouse).